Consider the following 235-residue polypeptide: Protein FAM3B (235 aa).

The N-terminal stretch at 1-29 (MRPLAGGLLKVVFVVFASLCAWYSGYLLA) is a signal peptide. Intrachain disulfides connect Cys63–Cys91 and Cys69–Cys229. A GG-type lectin domain is found at 72–233 (DTYAYRLLSG…IQIEGCIPKE (162 aa)). N-linked (GlcNAc...) asparagine glycosylation is found at Asn120 and Asn208.

Belongs to the FAM3 family. Post-translationally, 2 N-termini have been observed in the mature protein: the first at Glu-30, resulting from signal peptide cleavage, the second at Ser-46. O-glycosylated. In terms of tissue distribution, highly expressed in the pancreas. Also found in the colon, kidney, prostate, small intestine and testis.

It is found in the secreted. In terms of biological role, induces apoptosis of alpha and beta cells in a dose- and time-dependent manner. In Homo sapiens (Human), this protein is Protein FAM3B (FAM3B).